A 126-amino-acid chain; its full sequence is Aspartate 1-decarboxylase (126 aa).

S25 acts as the Schiff-base intermediate with substrate; via pyruvic acid in catalysis. S25 is modified (pyruvic acid (Ser)). Residue T57 coordinates substrate. Catalysis depends on Y58, which acts as the Proton donor. G73–A75 contributes to the substrate binding site.

It belongs to the PanD family. As to quaternary structure, heterooctamer of four alpha and four beta subunits. Pyruvate serves as cofactor. Is synthesized initially as an inactive proenzyme, which is activated by self-cleavage at a specific serine bond to produce a beta-subunit with a hydroxyl group at its C-terminus and an alpha-subunit with a pyruvoyl group at its N-terminus.

The protein resides in the cytoplasm. It carries out the reaction L-aspartate + H(+) = beta-alanine + CO2. It participates in cofactor biosynthesis; (R)-pantothenate biosynthesis; beta-alanine from L-aspartate: step 1/1. Functionally, catalyzes the pyruvoyl-dependent decarboxylation of aspartate to produce beta-alanine. The sequence is that of Aspartate 1-decarboxylase from Alcanivorax borkumensis (strain ATCC 700651 / DSM 11573 / NCIMB 13689 / SK2).